A 300-amino-acid polypeptide reads, in one-letter code: tRNA dimethylallyltransferase 2 (300 aa).

ATP is bound at residue 13 to 20 (GPTGVGKT). 15–20 (TGVGKT) is a substrate binding site. Positions 38-41 (DSRQ) are interaction with substrate tRNA.

The protein belongs to the IPP transferase family. As to quaternary structure, monomer. Mg(2+) is required as a cofactor.

It carries out the reaction adenosine(37) in tRNA + dimethylallyl diphosphate = N(6)-dimethylallyladenosine(37) in tRNA + diphosphate. Functionally, catalyzes the transfer of a dimethylallyl group onto the adenine at position 37 in tRNAs that read codons beginning with uridine, leading to the formation of N6-(dimethylallyl)adenosine (i(6)A). This Porphyromonas gingivalis (strain ATCC 33277 / DSM 20709 / CIP 103683 / JCM 12257 / NCTC 11834 / 2561) protein is tRNA dimethylallyltransferase 2.